The primary structure comprises 431 residues: Adenylosuccinate lyase (431 aa).

N(6)-(1,2-dicarboxyethyl)-AMP contacts are provided by residues 4-5, 67-69, and 93-94; these read RY, RHD, and TS. The Proton donor/acceptor role is filled by H141. Q212 contacts N(6)-(1,2-dicarboxyethyl)-AMP. The active-site Proton donor/acceptor is the S262. N(6)-(1,2-dicarboxyethyl)-AMP is bound by residues S263, 268–270, N276, and 307–311; these read KRN and SAERI.

The protein belongs to the lyase 1 family. Adenylosuccinate lyase subfamily. As to quaternary structure, homodimer and homotetramer. Residues from neighboring subunits contribute catalytic and substrate-binding residues to each active site.

The catalysed reaction is N(6)-(1,2-dicarboxyethyl)-AMP = fumarate + AMP. It carries out the reaction (2S)-2-[5-amino-1-(5-phospho-beta-D-ribosyl)imidazole-4-carboxamido]succinate = 5-amino-1-(5-phospho-beta-D-ribosyl)imidazole-4-carboxamide + fumarate. The protein operates within purine metabolism; AMP biosynthesis via de novo pathway; AMP from IMP: step 2/2. Its pathway is purine metabolism; IMP biosynthesis via de novo pathway; 5-amino-1-(5-phospho-D-ribosyl)imidazole-4-carboxamide from 5-amino-1-(5-phospho-D-ribosyl)imidazole-4-carboxylate: step 2/2. In terms of biological role, catalyzes two reactions in de novo purine nucleotide biosynthesis. Catalyzes the breakdown of 5-aminoimidazole- (N-succinylocarboxamide) ribotide (SAICAR or 2-[5-amino-1-(5-phospho-beta-D-ribosyl)imidazole-4-carboxamido]succinate) to 5-aminoimidazole-4-carboxamide ribotide (AICAR or 5-amino-1-(5-phospho-beta-D-ribosyl)imidazole-4-carboxamide) and fumarate, and of adenylosuccinate (ADS or N(6)-(1,2-dicarboxyethyl)-AMP) to adenosine monophosphate (AMP) and fumarate. The sequence is that of Adenylosuccinate lyase (purB) from Staphylococcus epidermidis (strain ATCC 35984 / DSM 28319 / BCRC 17069 / CCUG 31568 / BM 3577 / RP62A).